The sequence spans 150 residues: Large-conductance mechanosensitive channel (150 aa).

2 helical membrane passes run 19–39 (VGII…SDVL) and 85–105 (GIFL…FMLI).

This sequence belongs to the MscL family. Homopentamer.

It is found in the cell inner membrane. Its function is as follows. Channel that opens in response to stretch forces in the membrane lipid bilayer. May participate in the regulation of osmotic pressure changes within the cell. The protein is Large-conductance mechanosensitive channel of Chlorobium limicola (strain DSM 245 / NBRC 103803 / 6330).